The following is a 761-amino-acid chain: Nitrogen fixation protein FixI (761 aa).

The Cytoplasmic portion of the chain corresponds to 1–120 (MSCCTMDAES…SAPESDKTRN (120 aa)). Residues 36–106 (RQLDLSVSDV…EINSAGYRAH (71 aa)) enclose the HMA domain. The a metal cation site is built by C47 and C50. Residues 121–142 (QLLLAIGVSGFAAPNIMLLSVS) traverse the membrane as a helical segment. Residues 143-155 (VWSGADAATRDMF) are Extracellular-facing. Residues 156-177 (HWISAMIAAPALVYAGRFFFKS) traverse the membrane as a helical segment. At 178 to 184 (AWNALRH) the chain is on the cytoplasmic side. Residues 185-205 (GRTNMDVPISVTVSLSYAVSL) form a helical membrane-spanning segment. Over 206 to 217 (WETVHHGEHAWF) the chain is Extracellular. The helical transmembrane segment at 218–238 (DASVSLLFFLLIGRTLDHIMR) threads the bilayer. Residues 239 to 367 (EKARAAINGL…RARYRRIADR (129 aa)) are Cytoplasmic-facing. A helical transmembrane segment spans residues 368–390 (AATLYSPVVHLLALVSFLAWGFL). The Extracellular segment spans residues 391-395 (GGDWK). A helical transmembrane segment spans residues 396-415 (QAMLVAVAVLIITCPCALGL). The Cytoplasmic segment spans residues 416–691 (AVPVVQVVAA…AVARRSASLI (276 aa)). D453 serves as the catalytic 4-aspartylphosphate intermediate. 2 residues coordinate Mg(2+): D637 and D641. A helical transmembrane segment spans residues 692–711 (RQNFALAIGYNVLAVPIAIA). At 712 to 716 (GLATP) the chain is on the extracellular side. A helical membrane pass occupies residues 717–735 (LIAAVAMSTSSIIVVTNAL). Over 736-761 (RLNGFGKRPDMHIRRGIGRSAEVKAA) the chain is Cytoplasmic.

The protein belongs to the cation transport ATPase (P-type) (TC 3.A.3) family. Type IB subfamily.

It localises to the cell membrane. The catalysed reaction is ATP + H2O = ADP + phosphate + H(+). FixI is a pump of a specific cation involved in symbiotic nitrogen fixation. The four proteins FixG, FixH, FixI, and FixS may participate in a membrane-bound complex coupling the FixI cation pump with a redox process catalyzed by FixG. In Rhizobium leguminosarum bv. viciae, this protein is Nitrogen fixation protein FixI (fixI).